Here is a 244-residue protein sequence, read N- to C-terminus: Type III pantothenate kinase (244 aa).

Position 7–14 (Asp-7–Lys-14) interacts with ATP. Residues Tyr-95 and Gly-102 to Arg-105 each bind substrate. Asp-104 functions as the Proton acceptor in the catalytic mechanism. Thr-126 lines the ATP pocket. Thr-177 contributes to the substrate binding site.

This sequence belongs to the type III pantothenate kinase family. In terms of assembly, homodimer. It depends on NH4(+) as a cofactor. Requires K(+) as cofactor.

Its subcellular location is the cytoplasm. It carries out the reaction (R)-pantothenate + ATP = (R)-4'-phosphopantothenate + ADP + H(+). Its pathway is cofactor biosynthesis; coenzyme A biosynthesis; CoA from (R)-pantothenate: step 1/5. Functionally, catalyzes the phosphorylation of pantothenate (Pan), the first step in CoA biosynthesis. The chain is Type III pantothenate kinase from Acinetobacter baumannii (strain ACICU).